We begin with the raw amino-acid sequence, 137 residues long: Basic phospholipase A2 beta-bungarotoxin A-AL4 chain (137 aa).

A signal peptide spans 1–10 (LAVCVSLLGA). The propeptide occupies 11-18 (ANIPPQHL). 6 disulfides stabilise this stretch: C45-C137, C47-C63, C62-C118, C69-C111, C79-C104, and C97-C109. Ca(2+) contacts are provided by Y46, G48, and G50. H66 is an active-site residue. D67 is a Ca(2+) binding site. Residue D112 is part of the active site.

Belongs to the phospholipase A2 family. Group I subfamily. D49 sub-subfamily. In terms of assembly, heterodimer; disulfide-linked. The A chains have phospholipase A2 activity and the B chains show homology with the basic protease inhibitors. Ca(2+) serves as cofactor. As to expression, expressed by the venom gland.

Its subcellular location is the secreted. The enzyme catalyses a 1,2-diacyl-sn-glycero-3-phosphocholine + H2O = a 1-acyl-sn-glycero-3-phosphocholine + a fatty acid + H(+). Snake venom phospholipase A2 (PLA2) that inhibits neuromuscular transmission by blocking acetylcholine release from the nerve termini. PLA2 catalyzes the calcium-dependent hydrolysis of the 2-acyl groups in 3-sn-phosphoglycerides. This Bungarus multicinctus (Many-banded krait) protein is Basic phospholipase A2 beta-bungarotoxin A-AL4 chain.